The primary structure comprises 857 residues: Alanine--tRNA ligase (857 aa).

4 residues coordinate Zn(2+): histidine 556, histidine 560, cysteine 658, and histidine 662.

Belongs to the class-II aminoacyl-tRNA synthetase family. Zn(2+) serves as cofactor.

The protein localises to the cytoplasm. The enzyme catalyses tRNA(Ala) + L-alanine + ATP = L-alanyl-tRNA(Ala) + AMP + diphosphate. In terms of biological role, catalyzes the attachment of alanine to tRNA(Ala) in a two-step reaction: alanine is first activated by ATP to form Ala-AMP and then transferred to the acceptor end of tRNA(Ala). Also edits incorrectly charged Ser-tRNA(Ala) and Gly-tRNA(Ala) via its editing domain. This chain is Alanine--tRNA ligase, found in Sulfurovum sp. (strain NBC37-1).